Consider the following 280-residue polypeptide: Bifunctional protein FolD (280 aa).

Residues 165–167 (GRS), Ser-190, and Ile-231 contribute to the NADP(+) site.

This sequence belongs to the tetrahydrofolate dehydrogenase/cyclohydrolase family. Homodimer.

The catalysed reaction is (6R)-5,10-methylene-5,6,7,8-tetrahydrofolate + NADP(+) = (6R)-5,10-methenyltetrahydrofolate + NADPH. It carries out the reaction (6R)-5,10-methenyltetrahydrofolate + H2O = (6R)-10-formyltetrahydrofolate + H(+). It participates in one-carbon metabolism; tetrahydrofolate interconversion. Functionally, catalyzes the oxidation of 5,10-methylenetetrahydrofolate to 5,10-methenyltetrahydrofolate and then the hydrolysis of 5,10-methenyltetrahydrofolate to 10-formyltetrahydrofolate. The polypeptide is Bifunctional protein FolD (Moorella thermoacetica (strain ATCC 39073 / JCM 9320)).